A 604-amino-acid chain; its full sequence is Elongation factor 4 (604 aa).

The region spanning 9–191 (DAIRNFCIIA…AVISRVPAPA (183 aa)) is the tr-type G domain. GTP-binding positions include 21 to 26 (DHGKST) and 138 to 141 (NKID).

Belongs to the TRAFAC class translation factor GTPase superfamily. Classic translation factor GTPase family. LepA subfamily.

Its subcellular location is the cell inner membrane. It catalyses the reaction GTP + H2O = GDP + phosphate + H(+). In terms of biological role, required for accurate and efficient protein synthesis under certain stress conditions. May act as a fidelity factor of the translation reaction, by catalyzing a one-codon backward translocation of tRNAs on improperly translocated ribosomes. Back-translocation proceeds from a post-translocation (POST) complex to a pre-translocation (PRE) complex, thus giving elongation factor G a second chance to translocate the tRNAs correctly. Binds to ribosomes in a GTP-dependent manner. The chain is Elongation factor 4 from Prosthecochloris aestuarii (strain DSM 271 / SK 413).